The primary structure comprises 161 residues: Allophycocyanin beta chain (161 aa).

Residue Asn71 is modified to N4-methylasparagine. Cys81 lines the (2R,3E)-phycocyanobilin pocket.

The protein belongs to the phycobiliprotein family. Heterodimer of an alpha and a beta chain. Post-translationally, contains one covalently linked phycocyanobilin chromophore.

The protein localises to the plastid. Its subcellular location is the chloroplast thylakoid membrane. In terms of biological role, light-harvesting photosynthetic bile pigment-protein from the phycobiliprotein complex. Allophycocyanin has a maximum absorption at approximately 650 nanometers. The polypeptide is Allophycocyanin beta chain (apcB) (Cyanidium caldarium (Red alga)).